Reading from the N-terminus, the 63-residue chain is Beta-defensin 4 (63 aa).

The first 22 residues, 1–22, serve as a signal peptide directing secretion; it reads MRLHHLLLAVLFLVLSAGSGFT. Glutamine 23 carries the pyrrolidone carboxylic acid modification. 3 disulfide bridges follow: cysteine 31-cysteine 60, cysteine 38-cysteine 53, and cysteine 43-cysteine 61.

This sequence belongs to the beta-defensin family. In terms of tissue distribution, neutrophilic granules.

The protein localises to the secreted. In terms of biological role, has bactericidal activity. Active against E.coli ML35 and S.aureus 502A. The polypeptide is Beta-defensin 4 (DEFB4) (Bos taurus (Bovine)).